Here is a 356-residue protein sequence, read N- to C-terminus: Holliday junction branch migration complex subunit RuvB (356 aa).

The segment at 13-197 (LPPARRMLSA…FGIVARLEFY (185 aa)) is large ATPase domain (RuvB-L). Residues leucine 36, arginine 37, glycine 78, lysine 81, threonine 82, threonine 83, 144-146 (EDY), arginine 187, tyrosine 197, and arginine 234 each bind ATP. Threonine 82 contributes to the Mg(2+) binding site. The small ATPAse domain (RuvB-S) stretch occupies residues 198-268 (TPEELARIVK…IANRALAMLD (71 aa)). The segment at 271 to 356 (PQGFDLMDRK…RGNAENLFEE (86 aa)) is head domain (RuvB-H). Residues arginine 326 and arginine 331 each coordinate DNA.

This sequence belongs to the RuvB family. In terms of assembly, homohexamer. Forms an RuvA(8)-RuvB(12)-Holliday junction (HJ) complex. HJ DNA is sandwiched between 2 RuvA tetramers; dsDNA enters through RuvA and exits via RuvB. An RuvB hexamer assembles on each DNA strand where it exits the tetramer. Each RuvB hexamer is contacted by two RuvA subunits (via domain III) on 2 adjacent RuvB subunits; this complex drives branch migration. In the full resolvosome a probable DNA-RuvA(4)-RuvB(12)-RuvC(2) complex forms which resolves the HJ.

The protein resides in the cytoplasm. The enzyme catalyses ATP + H2O = ADP + phosphate + H(+). Its function is as follows. The RuvA-RuvB-RuvC complex processes Holliday junction (HJ) DNA during genetic recombination and DNA repair, while the RuvA-RuvB complex plays an important role in the rescue of blocked DNA replication forks via replication fork reversal (RFR). RuvA specifically binds to HJ cruciform DNA, conferring on it an open structure. The RuvB hexamer acts as an ATP-dependent pump, pulling dsDNA into and through the RuvAB complex. RuvB forms 2 homohexamers on either side of HJ DNA bound by 1 or 2 RuvA tetramers; 4 subunits per hexamer contact DNA at a time. Coordinated motions by a converter formed by DNA-disengaged RuvB subunits stimulates ATP hydrolysis and nucleotide exchange. Immobilization of the converter enables RuvB to convert the ATP-contained energy into a lever motion, pulling 2 nucleotides of DNA out of the RuvA tetramer per ATP hydrolyzed, thus driving DNA branch migration. The RuvB motors rotate together with the DNA substrate, which together with the progressing nucleotide cycle form the mechanistic basis for DNA recombination by continuous HJ branch migration. Branch migration allows RuvC to scan DNA until it finds its consensus sequence, where it cleaves and resolves cruciform DNA. In Polaromonas naphthalenivorans (strain CJ2), this protein is Holliday junction branch migration complex subunit RuvB.